The primary structure comprises 449 residues: Methylenetetrahydrofolate--tRNA-(uracil-5-)-methyltransferase TrmFO (449 aa).

9-14 (GGGIAG) contacts FAD.

This sequence belongs to the MnmG family. TrmFO subfamily. FAD is required as a cofactor.

Its subcellular location is the cytoplasm. The enzyme catalyses uridine(54) in tRNA + (6R)-5,10-methylene-5,6,7,8-tetrahydrofolate + NADH + H(+) = 5-methyluridine(54) in tRNA + (6S)-5,6,7,8-tetrahydrofolate + NAD(+). The catalysed reaction is uridine(54) in tRNA + (6R)-5,10-methylene-5,6,7,8-tetrahydrofolate + NADPH + H(+) = 5-methyluridine(54) in tRNA + (6S)-5,6,7,8-tetrahydrofolate + NADP(+). In terms of biological role, catalyzes the folate-dependent formation of 5-methyl-uridine at position 54 (M-5-U54) in all tRNAs. This Gloeobacter violaceus (strain ATCC 29082 / PCC 7421) protein is Methylenetetrahydrofolate--tRNA-(uracil-5-)-methyltransferase TrmFO.